Reading from the N-terminus, the 320-residue chain is uncharacterized protein (320 aa).

It to S.pombe SpAC23H3.12c.

This is an uncharacterized protein from Saccharomyces cerevisiae (strain ATCC 204508 / S288c) (Baker's yeast).